The chain runs to 533 residues: Solute carrier family 2, facilitated glucose transporter member 2 (533 aa).

At 1-17 (MDGKSKMQAEKHLTGTL) the chain is on the cytoplasmic side. The helical transmembrane segment at 18 to 38 (VLSVFTAVLGFFQYGYSLGVI) threads the bilayer. Topologically, residues 39-110 (NAPQKVIEAH…SPHILTMYWS (72 aa)) are extracellular. N-linked (GlcNAc...) asparagine glycans are attached at residues N64 and N69. The helical transmembrane segment at 111-131 (LSVSMFAVGGMVSSFTVGWIG) threads the bilayer. At 132–136 (DRLGR) the chain is on the cytoplasmic side. The helical transmembrane segment at 137 to 157 (VKAMLVVNVLSIAGNLLMGLA) threads the bilayer. The Extracellular portion of the chain corresponds to 158–163 (KMGPSH). Residues 164–184 (ILIIAGRAITGLYCGLSSGLV) traverse the membrane as a helical segment. Residues 185 to 199 (PMYVSEVSPTALRGA) lie on the Cytoplasmic side of the membrane. The helical transmembrane segment at 200-220 (LGTLHQLAIVTGILISQVLGL) threads the bilayer. Q205 is a binding site for D-glucose. At 221-229 (DFLLGNDEL) the chain is on the extracellular side. A helical transmembrane segment spans residues 230-250 (WPLLLGLSGVAALLQFFLLLL). The Cytoplasmic portion of the chain corresponds to 251–315 (CPESPRYLYI…LFSSSKYRQA (65 aa)). The helical transmembrane segment at 316–336 (VIVALMVQISQQFSGINAIFY) threads the bilayer. D-glucose is bound by residues 326 to 327 (QQ) and N332. At 337-350 (YSTNIFQRAGVGQP) the chain is on the extracellular side. Residues 351–371 (VYATIGVGVVNTVFTVISVFL) traverse the membrane as a helical segment. Residue N361 coordinates D-glucose. At 372 to 379 (VEKAGRRS) the chain is on the cytoplasmic side. The chain crosses the membrane as a helical span at residues 380–400 (LFLAGLMGMLISAVAMTVGLV). Residues 401-413 (LLSQFAWMSYVSM) lie on the Extracellular side of the membrane. A helical transmembrane segment spans residues 414–434 (VAIFLFVIFFEVGPGPIPWFI). Residues E424 and W432 each coordinate D-glucose. The Cytoplasmic portion of the chain corresponds to 435–445 (VAELFSQGPRP). A helical membrane pass occupies residues 446–466 (AAIAVAGFCNWACNFIVGMCF). The Extracellular portion of the chain corresponds to 467–471 (QYIAD). A helical transmembrane segment spans residues 472–492 (LCGPYVFVVFAVLLLVFFLFA). Residues 493-533 (YLKVPETKGKSFEEIAAAFRRKKLPAKSMTELEDLRGGEEA) lie on the Cytoplasmic side of the membrane.

The protein belongs to the major facilitator superfamily. Sugar transporter (TC 2.A.1.1) family. Glucose transporter subfamily.

The protein localises to the cell membrane. It carries out the reaction D-glucose(out) = D-glucose(in). It catalyses the reaction D-fructose(out) = D-fructose(in). The enzyme catalyses L-dehydroascorbate(out) = L-dehydroascorbate(in). The catalysed reaction is D-galactose(in) = D-galactose(out). D-glucose and maltose competitively inhibit fructose transport. D-glucose, D-fructose and maltose inhibit deoxyglucose transport. Facilitative hexose transporter that mediates the transport of glucose, fructose and galactose. Likely mediates the bidirectional transfer of glucose across the plasma membrane of hepatocytes and is responsible for uptake of glucose by the beta cells. The sequence is that of Solute carrier family 2, facilitated glucose transporter member 2 from Gallus gallus (Chicken).